We begin with the raw amino-acid sequence, 427 residues long: Serine--tRNA ligase (427 aa).

231–233 is a binding site for L-serine; that stretch reads TAE. 262–264 serves as a coordination point for ATP; sequence RSE. Glu-285 contributes to the L-serine binding site. 349–352 contacts ATP; the sequence is EISS. Ser-385 serves as a coordination point for L-serine.

It belongs to the class-II aminoacyl-tRNA synthetase family. Type-1 seryl-tRNA synthetase subfamily. In terms of assembly, homodimer. The tRNA molecule binds across the dimer.

The protein localises to the cytoplasm. It catalyses the reaction tRNA(Ser) + L-serine + ATP = L-seryl-tRNA(Ser) + AMP + diphosphate + H(+). The enzyme catalyses tRNA(Sec) + L-serine + ATP = L-seryl-tRNA(Sec) + AMP + diphosphate + H(+). Its pathway is aminoacyl-tRNA biosynthesis; selenocysteinyl-tRNA(Sec) biosynthesis; L-seryl-tRNA(Sec) from L-serine and tRNA(Sec): step 1/1. Its function is as follows. Catalyzes the attachment of serine to tRNA(Ser). Is also able to aminoacylate tRNA(Sec) with serine, to form the misacylated tRNA L-seryl-tRNA(Sec), which will be further converted into selenocysteinyl-tRNA(Sec). The protein is Serine--tRNA ligase of Rhizobium johnstonii (strain DSM 114642 / LMG 32736 / 3841) (Rhizobium leguminosarum bv. viciae).